Reading from the N-terminus, the 94-residue chain is Late cornified envelope protein 3C (94 aa).

The span at Met1–Cys10 shows a compositional bias: low complexity. 2 disordered regions span residues Met1–Ser35 and Cys65–Cys94. Residues Gln11 to Ser34 show a composition bias toward pro residues. A compositionally biased stretch (gly residues) spans Gly78 to Cys94.

This sequence belongs to the LCE family. As to quaternary structure, interacts with CYSRT1; the interaction is direct. Skin-specific. Expression was readily detected in adult trunk skin, adult arm skin, fetal skin, penal skin, vulva, esophagus and tongue. Not expressed in the cervix, rectum, lung, colon, or placenta.

A structural component of the cornified envelope of the stratum corneum involved in innate cutaneous host defense. Possesses defensin-like antimicrobial activity against a broad spectrum of Gram-positive and Gram-negative bacteria, both aerobic and anaerobic species. Upon inflammation, may regulate skin barrier repair by shaping cutaneous microbiota composition and immune response to bacterial antigens. The sequence is that of Late cornified envelope protein 3C from Homo sapiens (Human).